The following is a 187-amino-acid chain: Auxin-binding protein T92 (187 aa).

A signal peptide spans Met1–Ser20. Cysteines 22 and 177 form a disulfide. The Zn(2+) site is built by His78, His80, and Glu84. Asn117 carries an N-linked (GlcNAc...) asparagine glycan. His128 is a Zn(2+) binding site. Positions Lys184–Leu187 match the Prevents secretion from ER motif.

As to quaternary structure, homodimer.

The protein localises to the endoplasmic reticulum lumen. Its function is as follows. This is probably a receptor for the plant hormone auxin. The sequence is that of Auxin-binding protein T92 (T92) from Nicotiana tabacum (Common tobacco).